The chain runs to 578 residues: DNA mismatch repair protein MutL (578 aa).

This sequence belongs to the DNA mismatch repair MutL/HexB family.

Its function is as follows. This protein is involved in the repair of mismatches in DNA. It is required for dam-dependent methyl-directed DNA mismatch repair. May act as a 'molecular matchmaker', a protein that promotes the formation of a stable complex between two or more DNA-binding proteins in an ATP-dependent manner without itself being part of a final effector complex. The sequence is that of DNA mismatch repair protein MutL from Carboxydothermus hydrogenoformans (strain ATCC BAA-161 / DSM 6008 / Z-2901).